Reading from the N-terminus, the 524-residue chain is Excitatory amino acid transporter 3 (524 aa).

Residues 1 to 18 are Cytoplasmic-facing; sequence MGKPARKGCDSKRFLKNN. The chain crosses the membrane as a helical span at residues 19-38; it reads WLLLSTVVAVVLGIVIGVLV. Residues 39-61 lie on the Extracellular side of the membrane; that stretch reads REYSNLSTLDKFYFAFPGEILMR. Asn-43 carries N-linked (GlcNAc...) asparagine glycosylation. The helical transmembrane segment at 62–82 threads the bilayer; it reads MLKLVILPLIVSSMITGVAAL. Topologically, residues 83–93 are cytoplasmic; that stretch reads DSNVSGKIGLR. Residues 94 to 114 traverse the membrane as a helical segment; it reads AVLYYFCTTIIAVILGIVLVV. Na(+) contacts are provided by Tyr-98, Thr-101, and Thr-102. Residues 115-205 lie on the Extracellular side of the membrane; sequence SIKPGVTQKV…RTKEYRVVGL (91 aa). N-linked (GlcNAc...) asparagine glycosylation is found at Asn-178 and Asn-195. A helical transmembrane segment spans residues 206-229; that stretch reads YSDGINVLGLIVFCLVFGLVIGKM. The Cytoplasmic segment spans residues 230–238; the sequence is GEKGQILVD. A helical membrane pass occupies residues 239–266; sequence FFNALSDATMKIVQIIMCYMPLGILFLI. Over 267 to 286 the chain is Extracellular; it reads AGKIIEVEDWEIFRKLGLYM. A helical transmembrane segment spans residues 287-308; it reads VTVLSGLAIHSIVILPLIYFIV. The Cytoplasmic portion of the chain corresponds to 309–313; sequence VRKNP. The discontinuously helical intramembrane region spans 314–344; it reads FRFAMGMTQALLTALMISSSSATLPVTFRCA. L-aspartate-binding residues include Ser-331 and Ser-333. Over 345–353 the chain is Cytoplasmic; sequence EEKNRVDKR. Residues 354–380 form a helical membrane-spanning segment; that stretch reads ITRFVLPVGATINMDGTALYEAVAAVF. Gly-362, Thr-364, Asn-366, and Asp-368 together coordinate Na(+). Thr-370 contributes to the L-aspartate binding site. At 381–393 the chain is on the extracellular side; the sequence is IAQLNDMDLSIGQ. The discontinuously helical intramembrane region spans 394–427; it reads IITISVTATAASIGAAGVPQAGLVTMVIVLSAVG. Na(+)-binding residues include Ser-405, Ile-406, and Ala-408. Val-411 contacts L-aspartate. At 428–440 the chain is on the extracellular side; sequence LPAEDVTLIIAVD. Residues 441–462 form a helical membrane-spanning segment; the sequence is WLLDRFRTVVNVLGDAFGTGIV. L-aspartate is bound by residues Arg-447, Thr-448, and Asn-451. 2 residues coordinate Na(+): Asn-451 and Asp-455. Residues 463-524 lie on the Cytoplasmic side of the membrane; that stretch reads EKLSKKELEQ…TISFTQTSQF (62 aa). Ser-517 and Ser-522 each carry phosphoserine.

The protein belongs to the dicarboxylate/amino acid:cation symporter (DAACS) (TC 2.A.23) family. SLC1A1 subfamily. As to quaternary structure, homotrimer. Interacts with ARL6IP5. Interacts with RTN2 (via N-terminus); the interaction promotes cell surface expression of SLC1A1. Interacts with SORCS2; this interaction is important for normal expression at the cell membrane. In terms of tissue distribution, brain, but also small intestine, kidney, liver and heart.

Its subcellular location is the cell membrane. The protein resides in the apical cell membrane. It is found in the synapse. It localises to the synaptosome. The protein localises to the early endosome membrane. Its subcellular location is the late endosome membrane. The protein resides in the recycling endosome membrane. It catalyses the reaction K(+)(in) + L-glutamate(out) + 3 Na(+)(out) + H(+)(out) = K(+)(out) + L-glutamate(in) + 3 Na(+)(in) + H(+)(in). It carries out the reaction K(+)(in) + L-aspartate(out) + 3 Na(+)(out) + H(+)(out) = K(+)(out) + L-aspartate(in) + 3 Na(+)(in) + H(+)(in). The enzyme catalyses D-aspartate(out) + K(+)(in) + 3 Na(+)(out) + H(+)(out) = D-aspartate(in) + K(+)(out) + 3 Na(+)(in) + H(+)(in). The catalysed reaction is K(+)(in) + L-cysteine(out) + 3 Na(+)(out) + H(+)(out) = K(+)(out) + L-cysteine(in) + 3 Na(+)(in) + H(+)(in). Its function is as follows. Sodium-dependent, high-affinity amino acid transporter that mediates the uptake of L-glutamate and also L-aspartate and D-aspartate. Can also transport L-cysteine. Functions as a symporter that transports one amino acid molecule together with two or three Na(+) ions and one proton, in parallel with the counter-transport of one K(+) ion. Mediates Cl(-) flux that is not coupled to amino acid transport; this avoids the accumulation of negative charges due to aspartate and Na(+) symport. Plays an important role in L-glutamate and L-aspartate reabsorption in renal tubuli. Plays a redundant role in the rapid removal of released glutamate from the synaptic cleft, which is essential for terminating the postsynaptic action of glutamate. Contributes to glutathione biosynthesis and protection against oxidative stress via its role in L-glutamate and L-cysteine transport. Negatively regulated by ARL6IP5. This Oryctolagus cuniculus (Rabbit) protein is Excitatory amino acid transporter 3 (SLC1A1).